We begin with the raw amino-acid sequence, 260 residues long: Hydroxyethylthiazole kinase (260 aa).

Met-38 lines the substrate pocket. ATP contacts are provided by Lys-114 and Ser-161. Residue Gly-188 participates in substrate binding.

This sequence belongs to the Thz kinase family. Mg(2+) serves as cofactor.

It carries out the reaction 5-(2-hydroxyethyl)-4-methylthiazole + ATP = 4-methyl-5-(2-phosphooxyethyl)-thiazole + ADP + H(+). It functions in the pathway cofactor biosynthesis; thiamine diphosphate biosynthesis; 4-methyl-5-(2-phosphoethyl)-thiazole from 5-(2-hydroxyethyl)-4-methylthiazole: step 1/1. Functionally, catalyzes the phosphorylation of the hydroxyl group of 4-methyl-5-beta-hydroxyethylthiazole (THZ). The chain is Hydroxyethylthiazole kinase from Campylobacter lari (strain RM2100 / D67 / ATCC BAA-1060).